A 352-amino-acid chain; its full sequence is Histidinol-phosphate aminotransferase (352 aa).

At Lys221 the chain carries N6-(pyridoxal phosphate)lysine.

The protein belongs to the class-II pyridoxal-phosphate-dependent aminotransferase family. Histidinol-phosphate aminotransferase subfamily. Homodimer. Pyridoxal 5'-phosphate is required as a cofactor.

The enzyme catalyses L-histidinol phosphate + 2-oxoglutarate = 3-(imidazol-4-yl)-2-oxopropyl phosphate + L-glutamate. It participates in amino-acid biosynthesis; L-histidine biosynthesis; L-histidine from 5-phospho-alpha-D-ribose 1-diphosphate: step 7/9. In Staphylococcus aureus (strain Mu3 / ATCC 700698), this protein is Histidinol-phosphate aminotransferase.